The primary structure comprises 355 residues: Mannonate dehydratase (355 aa).

This sequence belongs to the mannonate dehydratase family. It depends on Fe(2+) as a cofactor. Mn(2+) serves as cofactor.

It catalyses the reaction D-mannonate = 2-dehydro-3-deoxy-D-gluconate + H2O. It functions in the pathway carbohydrate metabolism; pentose and glucuronate interconversion. Catalyzes the dehydration of D-mannonate. This chain is Mannonate dehydratase, found in Brachyspira hyodysenteriae (strain ATCC 49526 / WA1).